A 389-amino-acid polypeptide reads, in one-letter code: Elongation factor Tu-3 (389 aa).

Positions 10–203 (KPHLNIGTMG…AVDTYVPMPE (194 aa)) constitute a tr-type G domain. The G1 stretch occupies residues 19-26 (GHVDHGKT). Residue 19 to 26 (GHVDHGKT) participates in GTP binding. Residue T26 participates in Mg(2+) binding. The interval 60–64 (GITIN) is G2. The interval 81–84 (DMPG) is G3. Residues 81-85 (DMPGH) and 136-139 (NKAD) contribute to the GTP site. The interval 136–139 (NKAD) is G4. The tract at residues 173–175 (SGL) is G5.

The protein belongs to the TRAFAC class translation factor GTPase superfamily. Classic translation factor GTPase family. EF-Tu/EF-1A subfamily. As to quaternary structure, monomer.

It is found in the cytoplasm. The catalysed reaction is GTP + H2O = GDP + phosphate + H(+). Its function is as follows. GTP hydrolase that promotes the GTP-dependent binding of aminoacyl-tRNA to the A-site of ribosomes during protein biosynthesis. This chain is Elongation factor Tu-3, found in Streptomyces ramocissimus.